A 316-amino-acid chain; its full sequence is Transaldolase (316 aa).

The active-site Schiff-base intermediate with substrate is the K132.

Belongs to the transaldolase family. Type 1 subfamily. In terms of assembly, homodimer.

It is found in the cytoplasm. The enzyme catalyses D-sedoheptulose 7-phosphate + D-glyceraldehyde 3-phosphate = D-erythrose 4-phosphate + beta-D-fructose 6-phosphate. It functions in the pathway carbohydrate degradation; pentose phosphate pathway; D-glyceraldehyde 3-phosphate and beta-D-fructose 6-phosphate from D-ribose 5-phosphate and D-xylulose 5-phosphate (non-oxidative stage): step 2/3. Transaldolase is important for the balance of metabolites in the pentose-phosphate pathway. This chain is Transaldolase, found in Vibrio cholerae serotype O1 (strain ATCC 39541 / Classical Ogawa 395 / O395).